Here is a 76-residue protein sequence, read N- to C-terminus: MDILKKSLFIVLFLGLVSLSICEEEKRENEDEEEQEDDEQSEEKRGLWKSLLKNVGVAAGKAALNAVTDMVNQGEQ.

The signal sequence occupies residues 1 to 22 (MDILKKSLFIVLFLGLVSLSIC). A propeptide spanning residues 23–45 (EEEKRENEDEEEQEDDEQSEEKR) is cleaved from the precursor. The segment at 25 to 44 (EKRENEDEEEQEDDEQSEEK) is disordered. Over residues 30–41 (EDEEEQEDDEQS) the composition is skewed to acidic residues. A Glutamine amide modification is found at glutamine 73. Positions 75-76 (EQ) are excised as a propeptide.

As to expression, expressed by the skin glands.

The protein localises to the secreted. In terms of biological role, has antimicrobial activity. The sequence is that of Dermaseptin-H1 from Pithecopus hypochondrialis (Orange-legged leaf frog).